The following is a 344-amino-acid chain: Phenylalanine--tRNA ligase alpha subunit (344 aa).

Glu256 provides a ligand contact to Mg(2+).

It belongs to the class-II aminoacyl-tRNA synthetase family. Phe-tRNA synthetase alpha subunit type 1 subfamily. In terms of assembly, tetramer of two alpha and two beta subunits. The cofactor is Mg(2+).

The protein resides in the cytoplasm. It catalyses the reaction tRNA(Phe) + L-phenylalanine + ATP = L-phenylalanyl-tRNA(Phe) + AMP + diphosphate + H(+). The protein is Phenylalanine--tRNA ligase alpha subunit of Geobacillus kaustophilus (strain HTA426).